A 447-amino-acid polypeptide reads, in one-letter code: Pentatricopeptide repeat-containing protein At3g53170 (447 aa).

PPR repeat units follow at residues 93 to 127 (RCKTYTKLFKVLGNCKQPDQASLLFEVMLSEGLKP), 128 to 158 (TIDVYTSLISVYGKSELLDKAFSTLEYMKSV), 164 to 198 (DVFTFTVLISCCCKLGRFDLVKSIVLEMSYLGVGC), 199 to 233 (STVTYNTIIDGYGKAGMFEEMESVLADMIEDGDSL), 235 to 269 (DVCTLNSIIGSYGNGRNMRKMESWYSRFQLMGVQP), 270 to 304 (DITTFNILILSFGKAGMYKKMCSVMDFMEKRFFSL), 305 to 339 (TTVTYNIVIETFGKAGRIEKMDDVFRKMKYQGVKP), 340 to 374 (NSITYCSLVNAYSKAGLVVKIDSVLRQIVNSDVVL), 375 to 409 (DTPFFNCIINAYGQAGDLATMKELYIQMEERKCKP), and 410 to 444 (DKITFATMIKTYTAHGIFDAVQELEKQMISSGENL).

This sequence belongs to the PPR family. P subfamily.

The polypeptide is Pentatricopeptide repeat-containing protein At3g53170 (Arabidopsis thaliana (Mouse-ear cress)).